We begin with the raw amino-acid sequence, 144 residues long: Ig heavy chain V region MOPC 141 (144 aa).

The N-terminal stretch at 1-19 (MAVLALLFCLATFPSCILS) is a signal peptide. The region spanning 20–130 (QVQLKESGPG…YYGRSDKYFT (111 aa)) is the Ig-like domain.

In Mus musculus (Mouse), this protein is Ig heavy chain V region MOPC 141.